Consider the following 519-residue polypeptide: GATA zinc finger domain-containing protein 8 (519 aa).

4 disordered regions span residues 25–182 (YSTG…SSSG), 198–249 (SNIN…SNNT), 273–359 (SNNM…NNKQ), and 431–453 (DERQ…KRRE). The segment covering 37–156 (TNNSQNKTNN…SSSITSPSSN (120 aa)) has biased composition (low complexity). A compositionally biased stretch (polar residues) spans 172–182 (SPNNKQVSSSG). Low complexity predominate over residues 273-357 (SNNMNINNQH…SNINNNNNNN (85 aa)). The stretch at 429-461 (KTDERQQKKRMESDKNAEKREKRREASRLLNNV) forms a coiled coil. The GATA-type zinc finger occupies 462 to 487 (CRNCKTTETPEWRKGPDGTKSLCNAC).

The chain is GATA zinc finger domain-containing protein 8 (gtaH) from Dictyostelium discoideum (Social amoeba).